The sequence spans 520 residues: GMP synthase [glutamine-hydrolyzing] (520 aa).

One can recognise a Glutamine amidotransferase type-1 domain in the interval 13–205 (KIIVLDYGSQ…ALNICKAKGD (193 aa)). Cysteine 90 acts as the Nucleophile in catalysis. Catalysis depends on residues histidine 179 and glutamate 181. Residues 206–395 (WSMDNFIDMQ…LGMPDHIVWR (190 aa)) enclose the GMPS ATP-PPase domain. Residue 233-239 (SGGVDSS) participates in ATP binding.

As to quaternary structure, homodimer.

It carries out the reaction XMP + L-glutamine + ATP + H2O = GMP + L-glutamate + AMP + diphosphate + 2 H(+). It functions in the pathway purine metabolism; GMP biosynthesis; GMP from XMP (L-Gln route): step 1/1. In terms of biological role, catalyzes the synthesis of GMP from XMP. In Streptococcus pneumoniae (strain ATCC 700669 / Spain 23F-1), this protein is GMP synthase [glutamine-hydrolyzing].